Reading from the N-terminus, the 317-residue chain is Pantothenate kinase (317 aa).

Residue glycine 99–serine 106 participates in ATP binding.

Belongs to the prokaryotic pantothenate kinase family.

It localises to the cytoplasm. The catalysed reaction is (R)-pantothenate + ATP = (R)-4'-phosphopantothenate + ADP + H(+). The protein operates within cofactor biosynthesis; coenzyme A biosynthesis; CoA from (R)-pantothenate: step 1/5. In Histophilus somni (strain 129Pt) (Haemophilus somnus), this protein is Pantothenate kinase.